The following is a 394-amino-acid chain: MGCLGNSKTEDQRNEEKAQREANKKIEKQLQKDKQVYRATHRLLLLGAGESGKSTIVKQMRILHVNGFNGEGGEEDPQAARSNSDGEKATKVQDIKNNLKEAIETIVAAMSNLVPPVELANPENQFRVDYILSVMNVPDFDFPPEFYEHAKALWEDEGVRACYERSNEYQLIDCAQYFLDKIDVIKQADYVPSDQDLLRCRVLTSGIFETKFQVDKVNFHMFDVGGQRDERRKWIQCFNDVTAIIFVVASSSYNMVIREDNQTNRLQEALNLFKSIWNNRWLRTISVILFLNKQDLLAEKVLAGKSKIEDYFPEFARYTTPEDATPEPGEDPRVTRAKYFIRDEFLRISTASGDGRHYCYPHFTCAVDTENIRRVFNDCRDIIQRMHLRQYELL.

The tract at residues 1-23 (MGCLGNSKTEDQRNEEKAQREAN) is disordered. A lipid anchor (N-palmitoyl glycine) is attached at G2. C3 is lipidated: S-palmitoyl cysteine. A compositionally biased stretch (basic and acidic residues) spans 8–23 (KTEDQRNEEKAQREAN). The G-alpha domain maps to 39 to 394 (ATHRLLLLGA…RMHLRQYELL (356 aa)). Positions 42 to 55 (RLLLLGAGESGKST) are G1 motif. 47 to 55 (GAGESGKST) provides a ligand contact to GTP. Position 54 (S54) interacts with Mg(2+). Residues 68–91 (FNGEGGEEDPQAARSNSDGEKATK) are disordered. A G2 motif region spans residues 196-204 (DLLRCRVLT). GTP-binding positions include 197 to 204 (LLRCRVLT), 223 to 227 (DVGGQ), 292 to 295 (NKQD), and A366. T204 lines the Mg(2+) pocket. Positions 219–228 (FHMFDVGGQR) are G3 motif. The segment at 288–295 (ILFLNKQD) is G4 motif. A G5 motif region spans residues 364–369 (TCAVDT).

This sequence belongs to the G-alpha family. G(s) subfamily. In terms of assembly, heterotrimeric G proteins are composed of 3 units; alpha, beta and gamma. The alpha chain contains the guanine nucleotide binding site. Interacts with CRY1; the interaction may block GPCR-mediated regulation of cAMP concentrations. Interacts with ADCY6 and stimulates its adenylyl cyclase activity. Interacts with ADCY2 and ADCY5. Stimulates the ADCY5 adenylyl cyclase activity. Interaction with SASH1.

The protein localises to the cell membrane. Functionally, guanine nucleotide-binding proteins (G proteins) function as transducers in numerous signaling pathways controlled by G protein-coupled receptors (GPCRs). Signaling involves the activation of adenylyl cyclases, resulting in increased levels of the signaling molecule cAMP. GNAS functions downstream of several GPCRs, including beta-adrenergic receptors. Stimulates the Ras signaling pathway via RAPGEF2. This is Guanine nucleotide-binding protein G(s) subunit alpha (GNAS) from Canis lupus familiaris (Dog).